The primary structure comprises 270 residues: MKKLLISFIAILFFICGFNLKAFAAEEIIDYQSLYNQAIQEGVLDQNSVSYNEWLKQNKEEFMPIYQDGLKQGVFLEPLSYNEWLKLNNYGQAPTGDIELFDDVTPRGSWGGFTLKAGDIFITNATSSAGIVGHAAIANGDNYILHMPGAGQGNQQLSTSNWMQKYTASGKWIKVYRLKDQTLARDVARYADRNFYSTTGSATKNVYLDYGIDTHLYQKNPTYCSKLVFQALYFGSGSRNVMQAVSGIVTPYGLIDTFTSAYRPSLVKTY.

Its function is as follows. Possibly involved in pGI2 replication mechanism. This is an uncharacterized protein from Bacillus thuringiensis.